The following is an 81-amino-acid chain: MSSTYCGNSSAKMSVHEVSESSLSLEQKTGFAFVGILCIFLGLLIIRCFKILLDPYSSMPSSTWEDEVEEFDKGTFEYALA.

A helical membrane pass occupies residues 29–49; that stretch reads TGFAFVGILCIFLGLLIIRCF.

This sequence belongs to the cortexin family.

The protein resides in the membrane. The chain is Cortexin-2 (Ctxn2) from Mus musculus (Mouse).